The primary structure comprises 190 residues: Segregation and condensation protein B (190 aa).

The protein belongs to the ScpB family. Homodimer. Homodimerization may be required to stabilize the binding of ScpA to the Smc head domains. Component of a cohesin-like complex composed of ScpA, ScpB and the Smc homodimer, in which ScpA and ScpB bind to the head domain of Smc. The presence of the three proteins is required for the association of the complex with DNA.

It localises to the cytoplasm. Participates in chromosomal partition during cell division. May act via the formation of a condensin-like complex containing Smc and ScpA that pull DNA away from mid-cell into both cell halves. This is Segregation and condensation protein B from Bacillus thuringiensis subsp. konkukian (strain 97-27).